We begin with the raw amino-acid sequence, 390 residues long: GTPase Obg (390 aa).

In terms of domain architecture, Obg spans 1-159 (MKFVDEASIL…RELLLELMLL (159 aa)). The segment at 127–147 (NTRFKSSVNRTPRQKTNGTPG) is disordered. Positions 129 to 145 (RFKSSVNRTPRQKTNGT) are enriched in polar residues. The 174-residue stretch at 160–333 (ADVGMLGMPN…LCWDVMTFIL (174 aa)) folds into the OBG-type G domain. GTP contacts are provided by residues 166 to 173 (GMPNAGKS), 191 to 195 (FTTLV), 213 to 216 (DIPG), 283 to 286 (NKID), and 314 to 316 (SAA). 2 residues coordinate Mg(2+): serine 173 and threonine 193.

Belongs to the TRAFAC class OBG-HflX-like GTPase superfamily. OBG GTPase family. In terms of assembly, monomer. The cofactor is Mg(2+).

It is found in the cytoplasm. Its function is as follows. An essential GTPase which binds GTP, GDP and possibly (p)ppGpp with moderate affinity, with high nucleotide exchange rates and a fairly low GTP hydrolysis rate. Plays a role in control of the cell cycle, stress response, ribosome biogenesis and in those bacteria that undergo differentiation, in morphogenesis control. In Shigella sonnei (strain Ss046), this protein is GTPase Obg.